The following is a 212-amino-acid chain: Ribosomal RNA small subunit methyltransferase G (212 aa).

S-adenosyl-L-methionine-binding positions include glycine 80, leucine 85, 131–132 (AE), and arginine 146.

Belongs to the methyltransferase superfamily. RNA methyltransferase RsmG family.

The protein localises to the cytoplasm. The catalysed reaction is guanosine(527) in 16S rRNA + S-adenosyl-L-methionine = N(7)-methylguanosine(527) in 16S rRNA + S-adenosyl-L-homocysteine. In terms of biological role, specifically methylates the N7 position of guanine in position 527 of 16S rRNA. This Xanthomonas campestris pv. campestris (strain 8004) protein is Ribosomal RNA small subunit methyltransferase G.